A 231-amino-acid polypeptide reads, in one-letter code: Androgen-dependent TFPI-regulating protein (231 aa).

At 1–7 (MTRTTTC) the chain is on the cytoplasmic side. The chain crosses the membrane as a helical span at residues 8 to 28 (VYHFLVWNWYIFLNYYIPLIG). Residues 29–45 (KDDEKLKEFHDGGRSKY) lie on the Extracellular side of the membrane. A helical membrane pass occupies residues 46–66 (LTLLNLLLQAIFFGVACLDDV). Residues 67 to 85 (LKRIIGRKDIKFITSTRDL) lie on the Cytoplasmic side of the membrane. The helical transmembrane segment at 86–106 (LFSTLVFPISTFIFLVFWTLF) threads the bilayer. Topologically, residues 107–123 (YYDRSLIYPKGLDDYFP) are extracellular. A helical transmembrane segment spans residues 124–144 (AWLNHAMHTYILLFVLVETIL). At 145–154 (RPHHYPSKKL) the chain is on the cytoplasmic side. Residues 155–172 (GLALLGACNLAYITRVLW) traverse the membrane as a helical segment. Topologically, residues 173–190 (RYSQTGNWVYPVFASLNP) are extracellular. A helical transmembrane segment spans residues 191–211 (LGIIIFFLVCYILNASIYLVG). Residues 212 to 231 (EKINHWKWGATVKPLMKKKK) are Cytoplasmic-facing.

This sequence belongs to the AIG1 family. Highly expressed in flank organs and weakly in testis and earlobes.

The protein resides in the cell membrane. The catalysed reaction is 9-hexadecanoyloxy-octadecanoate + H2O = 9-hydroxy-octadecanoate + hexadecanoate + H(+). It catalyses the reaction 12-hexadecanoyloxy-octadecanoate + H2O = 12-hydroxyoctadecanoate + hexadecanoate + H(+). The enzyme catalyses 9-(9Z-hexadecenoyloxy)-octadecanoate + H2O = (9Z)-hexadecenoate + 9-hydroxy-octadecanoate + H(+). It carries out the reaction 12-(9Z-hexadecenoyloxy)-octadecanoate + H2O = 12-hydroxyoctadecanoate + (9Z)-hexadecenoate + H(+). The catalysed reaction is 13-(9Z-hexadecenoyloxy)-octadecanoate + H2O = 13-hydroxy-octadecanoate + (9Z)-hexadecenoate + H(+). It catalyses the reaction 9-octadecanoyloxy-octadecanoate + H2O = 9-hydroxy-octadecanoate + octadecanoate + H(+). The enzyme catalyses 12-octadecanoyloxy-octadecanoate + H2O = 12-hydroxyoctadecanoate + octadecanoate + H(+). It carries out the reaction 13-octadecanoyloxy-octadecanoate + H2O = 13-hydroxy-octadecanoate + octadecanoate + H(+). The catalysed reaction is 9-(9Z-octadecenoyloxy)-octadecanoate + H2O = 9-hydroxy-octadecanoate + (9Z)-octadecenoate + H(+). It catalyses the reaction 12-(9Z-octadecenoyloxy)-octadecanoate + H2O = 12-hydroxyoctadecanoate + (9Z)-octadecenoate + H(+). The enzyme catalyses 13-(9Z-octadecenoyloxy)-octadecanoate + H2O = 13-hydroxy-octadecanoate + (9Z)-octadecenoate + H(+). It carries out the reaction 5-(9Z-octadecenoyloxy)-octadecanoate + H2O = 5-hydroxy-octadecanoate + (9Z)-octadecenoate + H(+). Its function is as follows. Hydrolyzes bioactive fatty-acid esters of hydroxy-fatty acids (FAHFAs), but not other major classes of lipids. Shows a preference for FAHFAs with branching distal from the carboxylate head group of the lipids. Regulates the expression and the cell-associated anticoagulant activity of the inhibitor TFPI in endothelial cells (in vitro). The sequence is that of Androgen-dependent TFPI-regulating protein (ADTRP) from Mesocricetus auratus (Golden hamster).